Here is a 192-residue protein sequence, read N- to C-terminus: Xanthine phosphoribosyltransferase (192 aa).

Positions 20 and 27 each coordinate xanthine. Ala-128–Ala-132 serves as a coordination point for 5-phospho-alpha-D-ribose 1-diphosphate. Lys-156 contributes to the xanthine binding site.

This sequence belongs to the purine/pyrimidine phosphoribosyltransferase family. Xpt subfamily. Homodimer.

Its subcellular location is the cytoplasm. The catalysed reaction is XMP + diphosphate = xanthine + 5-phospho-alpha-D-ribose 1-diphosphate. The protein operates within purine metabolism; XMP biosynthesis via salvage pathway; XMP from xanthine: step 1/1. Functionally, converts the preformed base xanthine, a product of nucleic acid breakdown, to xanthosine 5'-monophosphate (XMP), so it can be reused for RNA or DNA synthesis. In Staphylococcus aureus (strain JH1), this protein is Xanthine phosphoribosyltransferase.